The primary structure comprises 637 residues: 1-deoxy-D-xylulose-5-phosphate synthase (637 aa).

Thiamine diphosphate-binding positions include His74 and 115–117 (GHS). Asp146 lines the Mg(2+) pocket. Residues 147-148 (GA), Asn175, Tyr285, and Glu366 each bind thiamine diphosphate. Asn175 provides a ligand contact to Mg(2+).

The protein belongs to the transketolase family. DXPS subfamily. In terms of assembly, homodimer. The cofactor is Mg(2+). Requires thiamine diphosphate as cofactor.

It catalyses the reaction D-glyceraldehyde 3-phosphate + pyruvate + H(+) = 1-deoxy-D-xylulose 5-phosphate + CO2. It functions in the pathway metabolic intermediate biosynthesis; 1-deoxy-D-xylulose 5-phosphate biosynthesis; 1-deoxy-D-xylulose 5-phosphate from D-glyceraldehyde 3-phosphate and pyruvate: step 1/1. In terms of biological role, catalyzes the acyloin condensation reaction between C atoms 2 and 3 of pyruvate and glyceraldehyde 3-phosphate to yield 1-deoxy-D-xylulose-5-phosphate (DXP). The protein is 1-deoxy-D-xylulose-5-phosphate synthase of Pelotomaculum thermopropionicum (strain DSM 13744 / JCM 10971 / SI).